We begin with the raw amino-acid sequence, 161 residues long: uncharacterized protein (161 aa).

2 disordered regions span residues 1-67 (MNSN…IQNF) and 80-147 (DSHQ…KKKQ). The span at 84 to 126 (NFNDNGFNNNNNNNNSNMNHNFSNQNNYNNNNNNNNNNNSNFN) shows a compositional bias: low complexity. Polar residues predominate over residues 135–147 (GTSSQVGNNKKKQ).

This is an uncharacterized protein from Dictyostelium discoideum (Social amoeba).